We begin with the raw amino-acid sequence, 148 residues long: Globin, monomeric component M-IV (148 aa).

Residues 2–147 (GLSAAQRQVV…ISGALISGLQ (146 aa)) form the Globin domain. His-91 lines the heme b pocket.

As to quaternary structure, monomer.

In Glycera dibranchiata (Bloodworm), this protein is Globin, monomeric component M-IV.